A 1010-amino-acid chain; its full sequence is Sodium/potassium-transporting ATPase subunit alpha-3 (1010 aa).

Residues 1-21 form a disordered region; the sequence is MGDKDDRFPKKKKGGTKDMDA. Topologically, residues 1–74 are cytoplasmic; the sequence is MGDKDDRFPK…NALTPPPTTP (74 aa). Residues 69–71 form an interaction with phosphoinositide-3 kinase region; sequence PPP. Residues 75–95 form a helical membrane-spanning segment; it reads EWVKFCRQLFGGFSILLWTGA. The Extracellular segment spans residues 96–118; that stretch reads ILCFLAYAIQAATEDEPAGDNLY. The chain crosses the membrane as a helical span at residues 119–139; that stretch reads LGIVLTAVVVITGCFSYFQEA. Residues 140 to 275 are Cytoplasmic-facing; the sequence is KSSKIMESFK…TGKTPIAVEI (136 aa). Positions 201-216 are enriched in polar residues; the sequence is DNSSLTGESEPQSRSP. The interval 201-221 is disordered; it reads DNSSLTGESEPQSRSPDCTHD. Residues 276 to 295 form a helical membrane-spanning segment; the sequence is EHFIHIITGVAVFLGVTFFI. Residues 296 to 307 are Extracellular-facing; the sequence is LAIILGYTWLKA. Residues 308–325 form a helical membrane-spanning segment; that stretch reads VIFLIGIIVANVPEGLLA. The Cytoplasmic portion of the chain corresponds to 326 to 759; it reads TVTVCLTLTA…EEGRLIFDNL (434 aa). Catalysis depends on aspartate 363, which acts as the 4-aspartylphosphate intermediate. Residues aspartate 704 and aspartate 708 each contribute to the Mg(2+) site. The helical transmembrane segment at 760–779 threads the bilayer; sequence KKSIAYTLTSNIPEITPFLF. Topologically, residues 780–789 are extracellular; it reads FIIVNIPLAL. The chain crosses the membrane as a helical span at residues 790–810; it reads GTITILCIDLGTDMGSAISLA. Residues 811–830 lie on the Cytoplasmic side of the membrane; that stretch reads YETAESDIMKRQPRNPCRDK. A helical transmembrane segment spans residues 831 to 853; that stretch reads LVNERLISIAYGQIGMIQALGGF. At 854–905 the chain is on the extracellular side; it reads FSYFVILAENGFLPSQLVGIRLNWDDRSLNDLEDSYGQQWTYEQRKIVEFTC. A helical transmembrane segment spans residues 906–925; the sequence is HTAFFVSIVVVQWADLIICK. Residues 926–938 are Cytoplasmic-facing; the sequence is TRRNSVFQQGMKN. Serine 930 bears the Phosphoserine; by PKA mark. The helical transmembrane segment at 939–957 threads the bilayer; that stretch reads KILIFGLFEETALAAFLSY. Residues 958–972 are Extracellular-facing; it reads CPGMDVALRMYPLKP. A helical transmembrane segment spans residues 973–993; the sequence is TWWFWAFPYSFLIFVYDEARK. The Cytoplasmic portion of the chain corresponds to 994 to 1010; it reads LILCRNPGGWVEKETYY.

Belongs to the cation transport ATPase (P-type) (TC 3.A.3) family. Type IIC subfamily. As to quaternary structure, the sodium/potassium-transporting ATPase is composed of a catalytic alpha subunit, an auxiliary non-catalytic beta subunit and an additional regulatory subunit.

The protein localises to the cell membrane. The enzyme catalyses K(+)(out) + Na(+)(in) + ATP + H2O = K(+)(in) + Na(+)(out) + ADP + phosphate + H(+). In terms of biological role, this is the catalytic component of the active enzyme, which catalyzes the hydrolysis of ATP coupled with the exchange of sodium and potassium ions across the plasma membrane. This action creates the electrochemical gradient of sodium and potassium ions, providing the energy for active transport of various nutrients. In Oreochromis mossambicus (Mozambique tilapia), this protein is Sodium/potassium-transporting ATPase subunit alpha-3 (atp1a3).